Here is a 62-residue protein sequence, read N- to C-terminus: Large ribosomal subunit protein eL37 (62 aa).

The Zn(2+) site is built by Cys20, Cys23, Cys35, and Cys38. Residues 20–38 form a C4-type zinc finger; the sequence is CRRCGRKAFNVKKGYCAAC.

The protein belongs to the eukaryotic ribosomal protein eL37 family. The cofactor is Zn(2+).

Binds to the 23S rRNA. The chain is Large ribosomal subunit protein eL37 (rpl37e) from Pyrococcus abyssi (strain GE5 / Orsay).